A 246-amino-acid polypeptide reads, in one-letter code: MIRLNLSVKNLKEITDLLSTIVSEAKFRVDENGMSVTAVDPAHVAMIRLEVPKEAFVEFHTDGQEEIALDIDRLKSVIRLASSSENVGITKDGEKLKFELGTINKSISLLDPSTIVTPKIPNITSEYYAVLKKSDFERGLRAAEDISDSIRFTLSQDGFKAYSHSESEESEMILPKDLITDMSCNTTIKSSYPLEYLLKFIKAISSTDSLKLSFRDDYPLSVEFYLDQNPGAKIKGLFLLAPRMEQ.

Belongs to the PCNA family. As to quaternary structure, homotrimer. The subunits circularize to form a toroid; DNA passes through its center. Replication factor C (RFC) is required to load the toroid on the DNA.

In terms of biological role, sliding clamp subunit that acts as a moving platform for DNA processing. Responsible for tethering the catalytic subunit of DNA polymerase and other proteins to DNA during high-speed replication. In Thermoplasma acidophilum (strain ATCC 25905 / DSM 1728 / JCM 9062 / NBRC 15155 / AMRC-C165), this protein is DNA polymerase sliding clamp.